The following is a 206-amino-acid chain: Thymidylate kinase (206 aa).

11–18 lines the ATP pocket; that stretch reads GPEGAGKT.

The protein belongs to the thymidylate kinase family.

The catalysed reaction is dTMP + ATP = dTDP + ADP. Functionally, phosphorylation of dTMP to form dTDP in both de novo and salvage pathways of dTTP synthesis. The polypeptide is Thymidylate kinase (tmk) (Deinococcus radiodurans (strain ATCC 13939 / DSM 20539 / JCM 16871 / CCUG 27074 / LMG 4051 / NBRC 15346 / NCIMB 9279 / VKM B-1422 / R1)).